The sequence spans 485 residues: Glutamyl-tRNA(Gln) amidotransferase subunit A (485 aa).

Catalysis depends on charge relay system residues Lys79 and Ser154. Residue Ser178 is the Acyl-ester intermediate of the active site.

The protein belongs to the amidase family. GatA subfamily. Heterotrimer of A, B and C subunits.

It catalyses the reaction L-glutamyl-tRNA(Gln) + L-glutamine + ATP + H2O = L-glutaminyl-tRNA(Gln) + L-glutamate + ADP + phosphate + H(+). Allows the formation of correctly charged Gln-tRNA(Gln) through the transamidation of misacylated Glu-tRNA(Gln) in organisms which lack glutaminyl-tRNA synthetase. The reaction takes place in the presence of glutamine and ATP through an activated gamma-phospho-Glu-tRNA(Gln). This is Glutamyl-tRNA(Gln) amidotransferase subunit A from Staphylococcus saprophyticus subsp. saprophyticus (strain ATCC 15305 / DSM 20229 / NCIMB 8711 / NCTC 7292 / S-41).